Reading from the N-terminus, the 433-residue chain is Adenylosuccinate synthetase (433 aa).

GTP-binding positions include 11 to 17 (GDEGKGK) and 39 to 41 (GHT). Asp-12 acts as the Proton acceptor in catalysis. Mg(2+) is bound by residues Asp-12 and Gly-39. IMP is bound by residues 12–15 (DEGK), 37–40 (NAGH), Thr-134, Arg-148, Asn-230, Thr-245, and Arg-309. His-40 serves as the catalytic Proton donor. 305–311 (VTTGRKR) provides a ligand contact to substrate. GTP-binding positions include Arg-311, 337–339 (KLD), and 419–421 (GTG).

This sequence belongs to the adenylosuccinate synthetase family. As to quaternary structure, homodimer. Requires Mg(2+) as cofactor.

It localises to the cytoplasm. The catalysed reaction is IMP + L-aspartate + GTP = N(6)-(1,2-dicarboxyethyl)-AMP + GDP + phosphate + 2 H(+). Its pathway is purine metabolism; AMP biosynthesis via de novo pathway; AMP from IMP: step 1/2. Plays an important role in the de novo pathway and in the salvage pathway of purine nucleotide biosynthesis. Catalyzes the first committed step in the biosynthesis of AMP from IMP. In Saccharomyces cerevisiae (strain Lalvin EC1118 / Prise de mousse) (Baker's yeast), this protein is Adenylosuccinate synthetase.